Reading from the N-terminus, the 854-residue chain is Probable inactive serine/threonine-protein kinase DDB_G0274821 (854 aa).

Positions 1–266 (MPIKESFKRI…WPKLFIHPFF (266 aa)) constitute a Protein kinase domain. Asparagine 32 and asparagine 106 each carry an N-linked (GlcNAc...) asparagine glycan. A disordered region spans residues 116-135 (NNNNNNNNNNNNNNNNNNNN). 4 N-linked (GlcNAc...) asparagine glycosylation sites follow: asparagine 163, asparagine 279, asparagine 283, and asparagine 290. A disordered region spans residues 289 to 331 (LNKSSSSSSSSSSSSSSSSSSSSSSSLSFQQQQQPNNISSPNL). Residues 292-322 (SSSSSSSSSSSSSSSSSSSSSSSLSFQQQQQ) are compositionally biased toward low complexity. N-linked (GlcNAc...) asparagine glycans are attached at residues asparagine 325, asparagine 347, and asparagine 365. The segment at 384-408 (IISPNRPSSPPLSSLSSCSSSSSSS) is disordered. Residue asparagine 414 is glycosylated (N-linked (GlcNAc...) asparagine). The segment at 425 to 446 (NNNNNNNNNNNNNNNNNNNNNN) is disordered. N-linked (GlcNAc...) asparagine glycosylation is found at asparagine 520, asparagine 541, and asparagine 620. Positions 627–650 (SSPPPSSSSSSSSPSSPSSTSPSL) are disordered. The segment covering 633 to 650 (SSSSSSSPSSPSSTSPSL) has biased composition (low complexity). Asparagine 757 is a glycosylation site (N-linked (GlcNAc...) asparagine). Residues 770 to 792 (HWRVQISFLNILFILITINNNFI) form a helical membrane-spanning segment.

Belongs to the protein kinase superfamily. Ser/Thr protein kinase family.

It is found in the membrane. The polypeptide is Probable inactive serine/threonine-protein kinase DDB_G0274821 (Dictyostelium discoideum (Social amoeba)).